The sequence spans 1441 residues: Lysophospholipase NTE1 (1441 aa).

Residues 1-22 (MWLTSYVLPRLKNILLLQFHIT) are Lumenal-facing. Residues 23-43 (LPLNYLVLLLLSTVIITYLFL) traverse the membrane as a helical segment. Residues 44-1441 (RTRILSNYSQ…ENMLQRRNSI (1398 aa)) lie on the Cytoplasmic side of the membrane. 4 disordered regions span residues 154–173 (SNPS…PSND), 210–236 (THLN…TGEI), 376–445 (QDDT…NSSS), and 551–585 (NRTG…HFRN). The segment covering 376–388 (QDDTGSSASTIQK) has biased composition (polar residues). Positions 572 to 585 (SRTDRSESFDHFRN) are enriched in basic and acidic residues. A nucleoside 3',5'-cyclic phosphate-binding positions include 592–718 (NQFS…LTNS) and 707–836 (IYLK…VAKK). Residues 1137 to 1301 (LVLGGGGARG…VDNLPVTEMT (165 aa)) form the PNPLA domain. The GXGXXG motif lies at 1141–1146 (GGGARG). A GXSXG motif is present at residues 1168–1172 (GTSIG). S1170 acts as the Nucleophile in catalysis. The Proton acceptor role is filled by D1288. Positions 1288–1290 (DGG) match the DGA/G motif.

Belongs to the NTE family.

The protein localises to the endoplasmic reticulum membrane. The catalysed reaction is a 1-acyl-sn-glycero-3-phosphocholine + H2O = sn-glycerol 3-phosphocholine + a fatty acid + H(+). Its activity is regulated as follows. Inhibited by organophosphorus esters. Functionally, intracellular phospholipase B that catalyzes the double deacylation of phosphatidylcholine (PC) to glycerophosphocholine (GroPCho). Plays an important role in membrane lipid homeostasis. Responsible for the rapid PC turnover in response to inositol, elevated temperatures, or when choline is present in the growth medium. The chain is Lysophospholipase NTE1 (NTE1) from Kluyveromyces lactis (strain ATCC 8585 / CBS 2359 / DSM 70799 / NBRC 1267 / NRRL Y-1140 / WM37) (Yeast).